Consider the following 418-residue polypeptide: Serine hydroxymethyltransferase (418 aa).

(6S)-5,6,7,8-tetrahydrofolate is bound by residues Leu121 and 125 to 127 (GHL). Lys230 carries the post-translational modification N6-(pyridoxal phosphate)lysine. Residue 355 to 357 (SPF) participates in (6S)-5,6,7,8-tetrahydrofolate binding.

The protein belongs to the SHMT family. As to quaternary structure, homodimer. It depends on pyridoxal 5'-phosphate as a cofactor.

It localises to the cytoplasm. The catalysed reaction is (6R)-5,10-methylene-5,6,7,8-tetrahydrofolate + glycine + H2O = (6S)-5,6,7,8-tetrahydrofolate + L-serine. Its pathway is one-carbon metabolism; tetrahydrofolate interconversion. It participates in amino-acid biosynthesis; glycine biosynthesis; glycine from L-serine: step 1/1. Its function is as follows. Catalyzes the reversible interconversion of serine and glycine with tetrahydrofolate (THF) serving as the one-carbon carrier. This reaction serves as the major source of one-carbon groups required for the biosynthesis of purines, thymidylate, methionine, and other important biomolecules. Also exhibits THF-independent aldolase activity toward beta-hydroxyamino acids, producing glycine and aldehydes, via a retro-aldol mechanism. This chain is Serine hydroxymethyltransferase, found in Streptococcus pyogenes serotype M5 (strain Manfredo).